Consider the following 560-residue polypeptide: Vanillyl-alcohol oxidase (560 aa).

An FAD-binding PCMH-type domain is found at 67–272 (DYFLASAIVA…TKIGIWLMPN (206 aa)). The active site involves Tyr108. His422 is modified (tele-8alpha-FAD histidine). Catalysis depends on residues Tyr503 and Arg504.

This sequence to bacterial flavocytochrome p-cresol methyl hydroxylase. In terms of assembly, homooctamer (tetramer of tightly interacting dimers). FAD is required as a cofactor.

It is found in the peroxisome. It localises to the cytoplasm. The enzyme catalyses 4-hydroxy-3-methoxy-benzenemethanol + O2 = vanillin + H2O2. Its activity is regulated as follows. Competitively inhibited by cinnamyl and coniferyl alcohols and by isoeugenol. In terms of biological role, catalyzes the conversion of vanillin alcohol to vanillin, and also the conversion of a wide range of phenolic compounds bearing side chains of variable size at the para position of the aromatic ring. Crucial for the degradation of the secondary metabolites derived from the degradation of the lignin. Catalyzes besides the oxidation of 4-hydroxybenzyl alcohols, the oxidative deamination of 4-hydroxybenzylamines, the oxidative demethylation of 4-(methoxy-methyl)phenols and the oxidative hydration of 4-allylphenols. Most active with 4-allylphenols. The protein is Vanillyl-alcohol oxidase (VAOA) of Penicillium simplicissimum.